Consider the following 335-residue polypeptide: N-acetylglucosaminyl-phosphatidylinositol de-N-acetylase (335 aa).

Residues 3-23 (SAFTFLSLAIFPLALFIFWTL) form a helical membrane-spanning segment. N-linked (GlcNAc...) asparagine glycosylation is found at N128 and N153.

The protein belongs to the PIGL family.

Its subcellular location is the endoplasmic reticulum membrane. The catalysed reaction is a 6-(N-acetyl-alpha-D-glucosaminyl)-1-(1,2-diacyl-sn-glycero-3-phospho)-1D-myo-inositol + H2O = a 6-(alpha-D-glucosaminyl)-1-(1,2-diacyl-sn-glycero-3-phospho)-1D-myo-inositol + acetate. It participates in glycolipid biosynthesis; glycosylphosphatidylinositol-anchor biosynthesis. Its function is as follows. Involved in the second step of GPI biosynthesis. De-N-acetylation of N-acetylglucosaminyl-phosphatidylinositol. This Arthroderma benhamiae (strain ATCC MYA-4681 / CBS 112371) (Trichophyton mentagrophytes) protein is N-acetylglucosaminyl-phosphatidylinositol de-N-acetylase.